Reading from the N-terminus, the 257-residue chain is Homeobox protein goosecoid (257 aa).

Positions 160–219 (KRRHRTIFTDEQLEALENLFQETKYPDVGTREQLARKVHLREEKVEVWFKNRRAKWRRQK) form a DNA-binding region, homeobox. The disordered stretch occupies residues 213–257 (AKWRRQKRSSSEESENAEKWNKTSSSKASPEKREEEGKSDLDSDS). The span at 241–257 (SPEKREEEGKSDLDSDS) shows a compositional bias: basic and acidic residues.

The protein belongs to the paired homeobox family. Bicoid subfamily.

The protein resides in the nucleus. Its function is as follows. Regulates chordin (CHRD). May play a role in spatial programing within discrete embryonic fields or lineage compartments during organogenesis. In concert with NKX3-2, plays a role in defining the structural components of the middle ear; required for the development of the entire tympanic ring. Probably involved in the regulatory networks that define neural crest cell fate specification and determine mesoderm cell lineages in mammals. The chain is Homeobox protein goosecoid (GSC) from Gorilla gorilla gorilla (Western lowland gorilla).